A 119-amino-acid chain; its full sequence is Large ribosomal subunit protein bL20c (119 aa).

The protein belongs to the bacterial ribosomal protein bL20 family.

Its subcellular location is the plastid. The protein resides in the chloroplast. Binds directly to 23S ribosomal RNA and is necessary for the in vitro assembly process of the 50S ribosomal subunit. It is not involved in the protein synthesizing functions of that subunit. This chain is Large ribosomal subunit protein bL20c, found in Saccharum hybrid (Sugarcane).